A 73-amino-acid polypeptide reads, in one-letter code: Putative sodium channel toxin Ts39 (73 aa).

Residues 1-22 (MKTLNFCLFLVIISSLTVRVFC) form the signal peptide. In terms of domain architecture, LCN-type CS-alpha/beta spans 24–73 (NDRFLTVNDNYVICLYINKSFVNCENLCKAYMNAKDGFCRQPHCFCTDVE). 3 disulfide bridges follow: Cys37/Cys62, Cys47/Cys67, and Cys51/Cys69.

The protein belongs to the long (3 C-C) scorpion toxin superfamily. Sodium channel inhibitor family. Expressed by the venom gland.

The protein resides in the secreted. Putative sodium channel toxin. This is Putative sodium channel toxin Ts39 from Tityus serrulatus (Brazilian scorpion).